A 333-amino-acid chain; its full sequence is Electron transfer flavoprotein subunit alpha, mitochondrial (333 aa).

Residues 1–19 (MFRAAAPGQLRRAASLLRF) constitute a mitochondrion transit peptide. The interval 20 to 204 (QSTLVIAEHA…GISEWLDQKL (185 aa)) is domain I. An N6-acetyllysine; alternate modification is found at Lys59. The residue at position 59 (Lys59) is an N6-succinyllysine; alternate. Residue Lys62 is modified to N6-acetyllysine. Lys69 bears the N6-acetyllysine; alternate mark. Position 69 is an N6-succinyllysine; alternate (Lys69). Lys75 is modified (N6-acetyllysine). The residue at position 85 (Lys85) is an N6-acetyllysine; alternate. Position 85 is an N6-succinyllysine; alternate (Lys85). A Phosphothreonine modification is found at Thr93. N6-acetyllysine is present on residues Lys101 and Lys139. The residue at position 140 (Ser140) is a Phosphoserine. Position 158 is an N6-acetyllysine; alternate (Lys158). Lys158 carries the post-translational modification N6-succinyllysine; alternate. Lys164 carries the N6-acetyllysine modification. N6-succinyllysine is present on Lys187. Residue Lys203 is modified to N6-acetyllysine; alternate. An N6-succinyllysine; alternate modification is found at Lys203. The interval 205-333 (TKSDRPELTG…PEMTEILKKK (129 aa)) is domain II. Lys216 carries the post-translational modification N6-succinyllysine. Residue Arg223 participates in FAD binding. 2 positions are modified to N6-acetyllysine; alternate: Lys226 and Lys232. N6-succinyllysine; alternate occurs at positions 226 and 232. Residues Ser248, 263–266 (VGQT), 281–286 (SGAIQH), and Asn300 contribute to the FAD site. Lys301 is subject to N6-succinyllysine. An FAD-binding site is contributed by 318–319 (DL).

Belongs to the ETF alpha-subunit/FixB family. In terms of assembly, heterodimer composed of ETFA and ETFB. Identified in a complex that contains ETFA, ETFB and ETFRF1. Interaction with ETFRF1 promotes dissociation of the bound FAD and loss of electron transfer activity. Interacts with TASOR. FAD is required as a cofactor. In terms of tissue distribution, expressed in the spermatogonia, spermatocytes, ovary and granular cells within the cerebellum.

The protein localises to the mitochondrion matrix. Heterodimeric electron transfer flavoprotein that accepts electrons from several mitochondrial dehydrogenases, including acyl-CoA dehydrogenases, glutaryl-CoA and sarcosine dehydrogenase. It transfers the electrons to the main mitochondrial respiratory chain via ETF-ubiquinone oxidoreductase (ETF dehydrogenase). Required for normal mitochondrial fatty acid oxidation and normal amino acid metabolism. The chain is Electron transfer flavoprotein subunit alpha, mitochondrial (Etfa) from Mus musculus (Mouse).